Consider the following 730-residue polypeptide: MKIVRVALAVPLPRLFDYFVPDDVSLQIGMRVLVPFGTQKRVAIVADFPTKSDVPEDKLKAILQPLDLAPLFTPIYWDWLHWAANYYQAGLGDVLFQALPVKLRNGESAVKNDRTFWRITDAGKNALKQGELKRSKKQAEALQYLSETDLEKGNNDFSSAIWSALKAKGFIEEITIQTNPLSWQQRLGNNPIVNAENRLTLNKQQALAFSQLLFHSGFNVWLLDGVTGSGKTEIYLQYIEEILKSGKQVLVLVPEIGLTPQTVQRFKVRFNVEIDVLHSNLTDTQRLYVWDRARSGQSAIVIGTRSALFTQFSNLGAIILDEEHDSSYKQQDSWRYHARDLAIVLAQKLNISVLMGSATPSLESINNVQNGKYQHLVLSKRAGNSTALRHFVIDLKNQNIQNGLSKPLLERMKAHLEKGNQVLLFLNRRGFAPVLLCHECGWIAQCPHCEKPYTYHQHQNVLRCHHCGAQKTIPRQCGDCGSTHLVTTGLGTEQLEETLKTLFPHYSVARIDRDSTSRKGKLEGYLEDIQQGKSQILIGTQMLAKGHHFPNVTLVALVNVDSALFSLDFRAEERLAQLYIQVAGRAGRADKQGEVVLQTHYPDHPLLTTLLANGYQAFAKETLQLRHSMGLPPFTFQALIKAQARHSDLAENCLSQIADFFQSKQITGLQMLGPMPAPFSKKAGQYRWQLLLQHPSRMTLQKALREYQQAELEKNSQVRLILDVDPQDLS.

The region spanning 212–378 (LLFHSGFNVW…QNGKYQHLVL (167 aa)) is the Helicase ATP-binding domain. 225 to 232 (GVTGSGKT) is an ATP binding site. A DEAH box motif is present at residues 321-324 (DEEH). The Zn(2+) site is built by Cys437, Cys440, Cys446, Cys449, Cys464, Cys467, Cys477, and Cys480. In terms of domain architecture, Helicase C-terminal spans 472 to 640 (TIPRQCGDCG…LPPFTFQALI (169 aa)).

Belongs to the helicase family. PriA subfamily. Component of the replication restart primosome. It depends on Zn(2+) as a cofactor.

It carries out the reaction Couples ATP hydrolysis with the unwinding of duplex DNA by translocating in the 3'-5' direction.. The catalysed reaction is ATP + H2O = ADP + phosphate + H(+). Initiates the restart of stalled replication forks, which reloads the replicative helicase on sites other than the origin of replication. Recognizes and binds to abandoned replication forks and remodels them to uncover a helicase loading site. Promotes assembly of the primosome at these replication forks. This is Replication restart protein PriA from Haemophilus influenzae (strain ATCC 51907 / DSM 11121 / KW20 / Rd).